A 437-amino-acid polypeptide reads, in one-letter code: Adenosylhomocysteinase (437 aa).

Substrate-binding residues include T54, D125, and E170. Residue 171–173 (TTT) coordinates NAD(+). Residues K200 and D204 each coordinate substrate. NAD(+) contacts are provided by residues N205, 234 to 239 (GYGWVG), E258, N293, 314 to 316 (AGH), and N361.

It belongs to the adenosylhomocysteinase family. It depends on NAD(+) as a cofactor.

It localises to the cytoplasm. It carries out the reaction S-adenosyl-L-homocysteine + H2O = L-homocysteine + adenosine. The protein operates within amino-acid biosynthesis; L-homocysteine biosynthesis; L-homocysteine from S-adenosyl-L-homocysteine: step 1/1. Its function is as follows. May play a key role in the regulation of the intracellular concentration of adenosylhomocysteine. The sequence is that of Adenosylhomocysteinase from Pyrobaculum aerophilum (strain ATCC 51768 / DSM 7523 / JCM 9630 / CIP 104966 / NBRC 100827 / IM2).